A 475-amino-acid polypeptide reads, in one-letter code: Bifunctional protein HldE (475 aa).

The ribokinase stretch occupies residues 1–320 (MNSSYLNFKD…AIMFQRSHNT (320 aa)). 196 to 199 (NLLE) is a binding site for ATP. The active site involves D265. A cytidylyltransferase region spans residues 346–475 (FTNGCFDILH…TTSIIEKANL (130 aa)).

It in the N-terminal section; belongs to the carbohydrate kinase PfkB family. This sequence in the C-terminal section; belongs to the cytidylyltransferase family. Homodimer.

The enzyme catalyses D-glycero-beta-D-manno-heptose 7-phosphate + ATP = D-glycero-beta-D-manno-heptose 1,7-bisphosphate + ADP + H(+). It carries out the reaction D-glycero-beta-D-manno-heptose 1-phosphate + ATP + H(+) = ADP-D-glycero-beta-D-manno-heptose + diphosphate. It functions in the pathway nucleotide-sugar biosynthesis; ADP-L-glycero-beta-D-manno-heptose biosynthesis; ADP-L-glycero-beta-D-manno-heptose from D-glycero-beta-D-manno-heptose 7-phosphate: step 1/4. Its pathway is nucleotide-sugar biosynthesis; ADP-L-glycero-beta-D-manno-heptose biosynthesis; ADP-L-glycero-beta-D-manno-heptose from D-glycero-beta-D-manno-heptose 7-phosphate: step 3/4. Functionally, catalyzes the phosphorylation of D-glycero-D-manno-heptose 7-phosphate at the C-1 position to selectively form D-glycero-beta-D-manno-heptose-1,7-bisphosphate. Its function is as follows. Catalyzes the ADP transfer from ATP to D-glycero-beta-D-manno-heptose 1-phosphate, yielding ADP-D-glycero-beta-D-manno-heptose. The sequence is that of Bifunctional protein HldE from Marinomonas sp. (strain MWYL1).